A 122-amino-acid polypeptide reads, in one-letter code: Small ribosomal subunit protein uS13 (122 aa).

The tract at residues 97–122 is disordered; it reads PVRGQRTKTNARTRKGPARTVAGKKK.

Belongs to the universal ribosomal protein uS13 family. As to quaternary structure, part of the 30S ribosomal subunit. Forms a loose heterodimer with protein S19. Forms two bridges to the 50S subunit in the 70S ribosome.

Located at the top of the head of the 30S subunit, it contacts several helices of the 16S rRNA. In the 70S ribosome it contacts the 23S rRNA (bridge B1a) and protein L5 of the 50S subunit (bridge B1b), connecting the 2 subunits; these bridges are implicated in subunit movement. Contacts the tRNAs in the A and P-sites. The sequence is that of Small ribosomal subunit protein uS13 from Geobacter metallireducens (strain ATCC 53774 / DSM 7210 / GS-15).